The following is a 766-amino-acid chain: Phosphoribosylformylglycinamidine synthase subunit PurL (766 aa).

The active site involves histidine 49. Residues tyrosine 52 and lysine 91 each contribute to the ATP site. Residue glutamate 93 coordinates Mg(2+). Substrate contacts are provided by residues serine 94–histidine 97 and arginine 116. Residue histidine 95 is the Proton acceptor of the active site. Aspartate 117 lines the Mg(2+) pocket. A substrate-binding site is contributed by glutamine 240. Mg(2+) is bound at residue aspartate 268. Residue glutamate 312–glutamine 314 coordinates substrate. ATP-binding residues include aspartate 508 and glycine 545. Asparagine 546 provides a ligand contact to Mg(2+). Serine 548 is a substrate binding site.

This sequence belongs to the FGAMS family. As to quaternary structure, monomer. Part of the FGAM synthase complex composed of 1 PurL, 1 PurQ and 2 PurS subunits.

Its subcellular location is the cytoplasm. The enzyme catalyses N(2)-formyl-N(1)-(5-phospho-beta-D-ribosyl)glycinamide + L-glutamine + ATP + H2O = 2-formamido-N(1)-(5-O-phospho-beta-D-ribosyl)acetamidine + L-glutamate + ADP + phosphate + H(+). It functions in the pathway purine metabolism; IMP biosynthesis via de novo pathway; 5-amino-1-(5-phospho-D-ribosyl)imidazole from N(2)-formyl-N(1)-(5-phospho-D-ribosyl)glycinamide: step 1/2. In terms of biological role, part of the phosphoribosylformylglycinamidine synthase complex involved in the purines biosynthetic pathway. Catalyzes the ATP-dependent conversion of formylglycinamide ribonucleotide (FGAR) and glutamine to yield formylglycinamidine ribonucleotide (FGAM) and glutamate. The FGAM synthase complex is composed of three subunits. PurQ produces an ammonia molecule by converting glutamine to glutamate. PurL transfers the ammonia molecule to FGAR to form FGAM in an ATP-dependent manner. PurS interacts with PurQ and PurL and is thought to assist in the transfer of the ammonia molecule from PurQ to PurL. The chain is Phosphoribosylformylglycinamidine synthase subunit PurL from Synechococcus sp. (strain CC9902).